The sequence spans 91 residues: Soluble cytochrome b558 (91 aa).

A Cytochrome b5 heme-binding domain is found at leucine 8–glutamate 88. Cysteine 25 and cysteine 54 are oxidised to a cystine. Positions 43 and 71 each coordinate heme.

This Ectothiorhodospira shaposhnikovii (Ectothiorhodospira vacuolata) protein is Soluble cytochrome b558.